We begin with the raw amino-acid sequence, 722 residues long: MASTSLGASILVSHCSSAPEFQVSGMRLVFGYKAFGCRTSRRGFRVRCESKIQEKELRRCSPFLERLSLPREAALSSNEWKSVPDIWRSSVEKYGDRVAVVDPYHDPPSTFTYRQLEQEILDFVEGLRVVGVKADEKIALFADNSCRWLVADQGIMATGAVNVVRGSRSSVEELLQIYCHSESVALVVDNPEFFNRIAESFSYKAAPKFVILLWGEKSSLVTAGRHTPVYSYNEIKKFGQERRAKFARSNDSGKYEYEYIDPDDIATIMYTSGTTGNPKGVMLTHQNLLHQIRNLSDFVPAEAGERFLSMLPSWHAYERACEYFIFTCGVEQKYTSIRFLKDDLKRYQPHYLISVPLVYETLYSGIQKQISASSPARKFLALTLIKVSLAYTEMKRVYEGLCLTKNQKPPMYIVSLVDWLWARVVAFFLWPLHMLAEKLVHRKIRSSIGITKAGVSGGGSLPMHVDKFFEAIGVNVQNGYGLTETSPVVSARRLRCNVLGSVGHPIKDTEFKIVDHETGTVLPPGSKGIVKVRGPPVMKGYYKNPLATKQVIDDDGWFNTGDMGWITPQHSTGRSRSCGGVIVLEGRAKDTIVLSTGENVEPLEIEEAAMRSNLIQQIVVIGQDQRRLGAIVIPNKEAAEGAAKQKISPVDSEVNELSKETITSMVYEELRKWTSQCSFQVGPVLIVDEPFTIDNGLMTPTMKIRRDKVVDQYKNEIERLYK.

Residues 1-47 constitute a chloroplast transit peptide; it reads MASTSLGASILVSHCSSAPEFQVSGMRLVFGYKAFGCRTSRRGFRVR.

It belongs to the ATP-dependent AMP-binding enzyme family.

It is found in the plastid. It localises to the chloroplast. In terms of biological role, may be involved in the activation of fatty acids to acyl-carrier-protein. In Arabidopsis thaliana (Mouse-ear cress), this protein is Probable acyl-activating enzyme 16, chloroplastic (AAE16).